The chain runs to 376 residues: tRNA (guanine(26)-N(2))-dimethyltransferase (376 aa).

In terms of domain architecture, Trm1 methyltransferase spans 4 to 373; the sequence is VAVKEGLARI…APFGVVAEVM (370 aa). S-adenosyl-L-methionine is bound by residues Arg36, Arg61, Asp78, Asp120, and Ala121.

It belongs to the class I-like SAM-binding methyltransferase superfamily. Trm1 family.

It catalyses the reaction guanosine(26) in tRNA + 2 S-adenosyl-L-methionine = N(2)-dimethylguanosine(26) in tRNA + 2 S-adenosyl-L-homocysteine + 2 H(+). Its function is as follows. Dimethylates a single guanine residue at position 26 of a number of tRNAs using S-adenosyl-L-methionine as donor of the methyl groups. In Thermococcus kodakarensis (strain ATCC BAA-918 / JCM 12380 / KOD1) (Pyrococcus kodakaraensis (strain KOD1)), this protein is tRNA (guanine(26)-N(2))-dimethyltransferase.